The chain runs to 659 residues: Hemocyanin subunit B (659 aa).

The first 18 residues, 1–18, serve as a signal peptide directing secretion; the sequence is MVAKWCVLAMCLLVAVGA. Residues histidine 198, histidine 202, and histidine 232 each coordinate Cu cation. Asparagine 318 carries N-linked (GlcNAc...) asparagine glycosylation. Residues histidine 353, histidine 357, and histidine 393 each contribute to the Cu cation site. An intrachain disulfide couples cysteine 562 to cysteine 609.

Belongs to the tyrosinase family. Hemocyanin subfamily. 36-chain polymer consisting of 6 hexamers, each of which includes 4 different chains, A, B, C and D. In terms of tissue distribution, hemolymph.

It is found in the secreted. It localises to the extracellular space. Functionally, hemocyanins are copper-containing oxygen carriers occurring freely dissolved in the hemolymph of many mollusks and arthropods. This Scutigera coleoptrata (House centipede) protein is Hemocyanin subunit B (HCB).